We begin with the raw amino-acid sequence, 262 residues long: Sulfur carrier protein FdhD (262 aa).

Residue cysteine 105 is the Cysteine persulfide intermediate of the active site. 246 to 251 is a binding site for Mo-bis(molybdopterin guanine dinucleotide); it reads FVRKNR.

The protein belongs to the FdhD family.

The protein localises to the cytoplasm. Required for formate dehydrogenase (FDH) activity. Acts as a sulfur carrier protein that transfers sulfur from IscS to the molybdenum cofactor prior to its insertion into FDH. In Picrophilus torridus (strain ATCC 700027 / DSM 9790 / JCM 10055 / NBRC 100828 / KAW 2/3), this protein is Sulfur carrier protein FdhD.